The chain runs to 474 residues: tRNA-2-methylthio-N(6)-dimethylallyladenosine synthase (474 aa).

The region spanning 3–120 (KKLHIKTWGC…LPEMIEQVRR (118 aa)) is the MTTase N-terminal domain. Cys12, Cys49, Cys83, Cys157, Cys161, and Cys164 together coordinate [4Fe-4S] cluster. Residues 143 to 375 (RAEGPTAFVS…QDRITQQAMR (233 aa)) enclose the Radical SAM core domain. One can recognise a TRAM domain in the interval 378-441 (RHMMGTVQRI…TNSLRGKFIR (64 aa)).

This sequence belongs to the methylthiotransferase family. MiaB subfamily. Monomer. It depends on [4Fe-4S] cluster as a cofactor.

It localises to the cytoplasm. It carries out the reaction N(6)-dimethylallyladenosine(37) in tRNA + (sulfur carrier)-SH + AH2 + 2 S-adenosyl-L-methionine = 2-methylsulfanyl-N(6)-dimethylallyladenosine(37) in tRNA + (sulfur carrier)-H + 5'-deoxyadenosine + L-methionine + A + S-adenosyl-L-homocysteine + 2 H(+). Its function is as follows. Catalyzes the methylthiolation of N6-(dimethylallyl)adenosine (i(6)A), leading to the formation of 2-methylthio-N6-(dimethylallyl)adenosine (ms(2)i(6)A) at position 37 in tRNAs that read codons beginning with uridine. The chain is tRNA-2-methylthio-N(6)-dimethylallyladenosine synthase from Shewanella oneidensis (strain ATCC 700550 / JCM 31522 / CIP 106686 / LMG 19005 / NCIMB 14063 / MR-1).